Reading from the N-terminus, the 880-residue chain is Probable dipeptidyl-aminopeptidase B (880 aa).

Residues 1–26 show a composition bias toward basic and acidic residues; the sequence is MPRQRAPKEEEAELLTKQERSARSSE. Residues 1–71 are disordered; the sequence is MPRQRAPKEE…KYTDEDDEAQ (71 aa). The Cytoplasmic segment spans residues 1–93; that stretch reads MPRQRAPKEE…PISVDKKTRR (93 aa). Residues 30 to 40 are compositionally biased toward low complexity; the sequence is DTSISSISTTS. Residues 94–114 traverse the membrane as a helical; Signal-anchor for type II membrane protein segment; sequence WLWIVGIACVTGWALALVFFL. The Vacuolar portion of the chain corresponds to 115 to 880; it reads MSGSYKHVST…AQVDARMERR (766 aa). N533 carries N-linked (GlcNAc...) asparagine glycosylation. Residue S724 is the Charge relay system of the active site. An N-linked (GlcNAc...) asparagine glycan is attached at N778. Catalysis depends on charge relay system residues D801 and H834.

This sequence belongs to the peptidase S9B family.

It is found in the vacuole membrane. The catalysed reaction is Release of an N-terminal dipeptide, Xaa-Yaa-|-Zaa-, from a polypeptide, preferentially when Yaa is Pro, provided Zaa is neither Pro nor hydroxyproline.. Its function is as follows. Type IV dipeptidyl-peptidase which removes N-terminal dipeptides sequentially from polypeptides having unsubstituted N-termini provided that the penultimate residue is proline. In Pyrenophora tritici-repentis (strain Pt-1C-BFP) (Wheat tan spot fungus), this protein is Probable dipeptidyl-aminopeptidase B (dapB).